The chain runs to 355 residues: Class E basic helix-loop-helix protein 22 (355 aa).

2 disordered regions span residues 34-90 and 128-215; these read AFRS…GGGG and GRGS…KEQK. Gly residues-rich tracts occupy residues 81–90 and 185–207; these read GGGGASGGGG and GGSG…GGGS. Residues 216 to 270 form the bHLH domain; that stretch reads ALRLNINARERRRMHDLNDALDELRAVIPYAHSPSVRKLSKIATLLLAKNYILMQ.

As to quaternary structure, interacts with PRDM8. Brain-specific, with the highest expression in the cerebellum.

Its subcellular location is the nucleus. Functionally, inhibits DNA binding of TCF3/E47 homodimers and TCF3 (E47)/NEUROD1 heterodimers and acts as a strong repressor of Neurod1 and Myod-responsive genes, probably by heterodimerization with class a basic helix-loop-helix factors. Despite the presence of an intact basic domain, does not bind to DNA. In the brain, may function as an area-specific transcription factor that regulates the postmitotic acquisition of area identities and elucidate the genetic hierarchy between progenitors and postmitotic neurons driving neocortical arealization. May be required for the survival of a specific population of inhibitory neurons in the superficial laminae of the spinal cord dorsal horn that may regulate pruritis. Seems to play a crucial role in the retinogenesis, in the specification of amacrine and bipolar subtypes. Forms with PRDM8 a transcriptional repressor complex controlling genes involved in neural development and neuronal differentiation. The chain is Class E basic helix-loop-helix protein 22 (Bhlhe22) from Mus musculus (Mouse).